A 100-amino-acid polypeptide reads, in one-letter code: Large ribosomal subunit protein uL23 (100 aa).

This sequence belongs to the universal ribosomal protein uL23 family. In terms of assembly, part of the 50S ribosomal subunit. Contacts protein L29, and trigger factor when it is bound to the ribosome.

One of the early assembly proteins it binds 23S rRNA. One of the proteins that surrounds the polypeptide exit tunnel on the outside of the ribosome. Forms the main docking site for trigger factor binding to the ribosome. The protein is Large ribosomal subunit protein uL23 of Synechococcus sp. (strain CC9311).